A 310-amino-acid polypeptide reads, in one-letter code: Protein translocase subunit SecF (310 aa).

A run of 6 helical transmembrane segments spans residues 20 to 42, 140 to 160, 164 to 184, 194 to 214, 246 to 266, and 272 to 292; these read FKKV…IGIY, IEAG…YIWV, WYFG…ALGF, LSTI…SVVI, ILTV…GGEA, and VLVF…SAPI.

The protein belongs to the SecD/SecF family. SecF subfamily. In terms of assembly, forms a complex with SecD. Part of the essential Sec protein translocation apparatus which comprises SecA, SecYEG and auxiliary proteins SecDF-YajC and YidC.

It is found in the cell inner membrane. Its function is as follows. Part of the Sec protein translocase complex. Interacts with the SecYEG preprotein conducting channel. SecDF uses the proton motive force (PMF) to complete protein translocation after the ATP-dependent function of SecA. This chain is Protein translocase subunit SecF, found in Rickettsia canadensis (strain McKiel).